Reading from the N-terminus, the 498-residue chain is 3-octaprenyl-4-hydroxybenzoate carboxy-lyase (498 aa).

Asparagine 177 contributes to the Mn(2+) binding site. Prenylated FMN is bound by residues 180 to 182, 194 to 196, and 199 to 200; these read IYR, RWL, and RG. Glutamate 243 contributes to the Mn(2+) binding site. Residue aspartate 292 is the Proton donor of the active site.

It belongs to the UbiD family. In terms of assembly, homohexamer. Prenylated FMN serves as cofactor. It depends on Mn(2+) as a cofactor.

It localises to the cell membrane. The catalysed reaction is a 4-hydroxy-3-(all-trans-polyprenyl)benzoate + H(+) = a 2-(all-trans-polyprenyl)phenol + CO2. The protein operates within cofactor biosynthesis; ubiquinone biosynthesis. In terms of biological role, catalyzes the decarboxylation of 3-octaprenyl-4-hydroxy benzoate to 2-octaprenylphenol, an intermediate step in ubiquinone biosynthesis. The sequence is that of 3-octaprenyl-4-hydroxybenzoate carboxy-lyase from Methylococcus capsulatus (strain ATCC 33009 / NCIMB 11132 / Bath).